The following is a 140-amino-acid chain: Large ribosomal subunit protein uL16 (140 aa).

This sequence belongs to the universal ribosomal protein uL16 family. Part of the 50S ribosomal subunit.

In terms of biological role, binds 23S rRNA and is also seen to make contacts with the A and possibly P site tRNAs. This is Large ribosomal subunit protein uL16 from Malacoplasma penetrans (strain HF-2) (Mycoplasma penetrans).